The primary structure comprises 75 residues: Small integral membrane protein 7-A (75 aa).

The first 17 residues, 1-17, serve as a signal peptide directing secretion; sequence MIGDLLLFGTLLVNAGA. At 18–53 the chain is on the extracellular side; that stretch reads VLNFKLKKKESQGFGDDLTEATTGDNIREFLLSLRY. The chain crosses the membrane as a helical span at residues 54–74; the sequence is FRIFIALWNIFMMFCMIVLFG. Residue serine 75 is a topological domain, cytoplasmic.

It belongs to the SMIM7 family.

The protein resides in the membrane. The protein is Small integral membrane protein 7-A (smim7-a) of Xenopus laevis (African clawed frog).